The primary structure comprises 1585 residues: Sterol 3-beta-glucosyltransferase (1585 aa).

Positions 1-18 (MSPPISPTPPPLQPPFPP) are enriched in pro residues. Disordered stretches follow at residues 1–151 (MSPP…ESSF), 177–225 (PWEE…PTHT), and 249–279 (YQYATPETSSRRTSAAGSESSSEGEVPLPKG). 3 stretches are compositionally biased toward polar residues: residues 65 to 92 (DQATNSSNDSLIPSRQAPNQEETENAIT), 105 to 123 (DAQTVRFSSSSPASYSTHE), and 132 to 148 (PRTSSRAPNTASSQMAE). Residues 178–194 (WEEDDDSDDGEDDDEFI) are compositionally biased toward acidic residues. The span at 255–273 (ETSSRRTSAAGSESSSEGE) shows a compositional bias: low complexity. The region spanning 387 to 555 (ERLMEVFGLE…EAIVDVEKSP (169 aa)) is the GRAM 1 domain. The PH domain maps to 438–530 (LLVKSGPLHK…WVKAIQKVMF (93 aa)). 2 disordered regions span residues 625–645 (TSHATIKRHGTDSSAEKLGMA) and 666–852 (DGEP…GSES). The segment covering 670–689 (LEEHSQGPHHNDEDASHLPH) has biased composition (basic and acidic residues). Polar residues-rich tracts occupy residues 760-785 (TDSSTTVTESGPSLRSRTGRTKQASV), 806-817 (NKPSVVDSNSAE), and 827-840 (SWTSETSSGSQMVK). One can recognise a GRAM 2 domain in the interval 862–933 (RKFRTFFALS…RDLYGLKAQK (72 aa)). Residues serine 1043, arginine 1044, aspartate 1046, isoleucine 1358, histidine 1360, histidine 1373, glycine 1377, threonine 1378, aspartate 1397, and glutamine 1398 each contribute to the UDP-alpha-D-glucose site. Residues 1499 to 1552 (NRVRSRSRSRSRSSQGRFSPRRHTVDDDGWSVVSGGSRSRSGSASAVTSPERRP) are disordered. The segment covering 1529-1545 (SVVSGGSRSRSGSASAV) has biased composition (low complexity).

The protein belongs to the glycosyltransferase 28 family.

It localises to the cytoplasm. It is found in the membrane. It catalyses the reaction a sterol + UDP-alpha-D-glucose = a sterol 3-beta-D-glucoside + UDP + H(+). It carries out the reaction ergosterol + UDP-alpha-D-glucose = ergosteryl 3-beta-D-glucoside + UDP + H(+). Sterol glycosyltransferase responsible for the glycosylation of ergosterol to form ergosterol-glucoside. This is Sterol 3-beta-glucosyltransferase from Cryptococcus neoformans var. neoformans serotype D (strain B-3501A) (Filobasidiella neoformans).